A 788-amino-acid polypeptide reads, in one-letter code: Cap-specific mRNA (nucleoside-2'-O-)-methyltransferase 1 (788 aa).

Residues 25-71 form the G-patch domain; the sequence is YSNKAMEMMKKMGYENDKGLGKSNQGRLEPIIAVQQDGRRGFGLKLD. Residues 143–147 and Arg158 each bind substrate; that span reads KTVFD. One can recognise a RrmJ-type SAM-dependent 2'-O-MTase domain in the interval 171 to 384; sequence IFLNRAAVKM…ERYLVCKYKR (214 aa). Residue Asn174 coordinates S-adenosyl-L-methionine. Residue Lys179 is part of the active site. 215–221 provides a ligand contact to S-adenosyl-L-methionine; that stretch reads CAGPGGF. Asp298 is a catalytic residue. 308 to 310 is a substrate binding site; it reads NIQ. The Proton acceptor role is filled by Lys338. Substrate is bound at residue Asn373.

Interacts (via C-terminus) with r2d2 (via C-terminus).

It localises to the nucleus. Its subcellular location is the cytoplasm. The enzyme catalyses a 5'-end (N(7)-methyl 5'-triphosphoguanosine)-ribonucleoside in mRNA + S-adenosyl-L-methionine = a 5'-end (N(7)-methyl 5'-triphosphoguanosine)-(2'-O-methyl-ribonucleoside) in mRNA + S-adenosyl-L-homocysteine + H(+). Functionally, S-adenosyl-L-methionine-dependent methyltransferase that mediates mRNA cap1 2'-O-ribose methylation to the 5'-cap structure of mRNAs. Methylates the ribose of the first nucleotide of a m(7)GpppG-capped mRNA to produce m(7)GpppNmp (cap1). Positively regulates the Ago2-dependent small RNA pathway, with roles in both siRNA biogenesis and RISC assembly. Involved in facilitating conversion of pre-RISC into holo-RISC, possibly by promoting the unwinding of Ago2-bound siRNA duplexes and thus the retention of the guide strand in holo-RISC. The protein is Cap-specific mRNA (nucleoside-2'-O-)-methyltransferase 1 of Drosophila melanogaster (Fruit fly).